Here is a 455-residue protein sequence, read N- to C-terminus: UDP-N-acetylmuramoylalanine--D-glutamate ligase (455 aa).

Residue 118 to 124 (GSNAKST) participates in ATP binding.

The protein belongs to the MurCDEF family.

Its subcellular location is the cytoplasm. It carries out the reaction UDP-N-acetyl-alpha-D-muramoyl-L-alanine + D-glutamate + ATP = UDP-N-acetyl-alpha-D-muramoyl-L-alanyl-D-glutamate + ADP + phosphate + H(+). The protein operates within cell wall biogenesis; peptidoglycan biosynthesis. Its function is as follows. Cell wall formation. Catalyzes the addition of glutamate to the nucleotide precursor UDP-N-acetylmuramoyl-L-alanine (UMA). The chain is UDP-N-acetylmuramoylalanine--D-glutamate ligase from Chromohalobacter salexigens (strain ATCC BAA-138 / DSM 3043 / CIP 106854 / NCIMB 13768 / 1H11).